Consider the following 298-residue polypeptide: MKDIISVYDFSKSDFDELFELADKLRNMSTYPKILKEKTVALAFFEPSTRTYLSFNKAAINLGASTIGFSGEEGTSIAKGENLADTIRMLNNYADMIVIRHKFDGAAKFASEISEIPVINAGDGKHEHPTQTVIDFYTIYRNFKNIDGLTFGLMGDLRYARVVNSFLRALTRFKPKKVYLISPPQLSARKEILEELNYPYREVIDYNEVIEEIDVLYVTRIQKERFPDESEYEKVKESYVVDMNLVSKMKKDAIILHALPRVNEISREVDKTPQAKYFEQASYAVPVRMAIFHKIVGE.

Carbamoyl phosphate is bound by residues Arg50 and Thr51. L-aspartate is bound at residue Lys79. Carbamoyl phosphate is bound by residues Arg100, His128, and Gln131. 2 residues coordinate L-aspartate: Arg161 and Arg220. Carbamoyl phosphate-binding residues include Leu259 and Pro260.

It belongs to the aspartate/ornithine carbamoyltransferase superfamily. ATCase family. Heterooligomer of catalytic and regulatory chains.

The enzyme catalyses carbamoyl phosphate + L-aspartate = N-carbamoyl-L-aspartate + phosphate + H(+). The protein operates within pyrimidine metabolism; UMP biosynthesis via de novo pathway; (S)-dihydroorotate from bicarbonate: step 2/3. Its function is as follows. Catalyzes the condensation of carbamoyl phosphate and aspartate to form carbamoyl aspartate and inorganic phosphate, the committed step in the de novo pyrimidine nucleotide biosynthesis pathway. The sequence is that of Aspartate carbamoyltransferase catalytic subunit from Sulfurisphaera tokodaii (strain DSM 16993 / JCM 10545 / NBRC 100140 / 7) (Sulfolobus tokodaii).